The sequence spans 326 residues: Putative GTPase CC_2483 (326 aa).

GTP is bound by residues 61–69 (GVPGAGKST), Asp-203, and 238–240 (SGL).

Belongs to the SIMIBI class G3E GTPase family. ArgK/MeaB subfamily.

In terms of biological role, may have GTPase activity. May also bind and hydrolyze ATP. May function as chaperone. The polypeptide is Putative GTPase CC_2483 (Caulobacter vibrioides (strain ATCC 19089 / CIP 103742 / CB 15) (Caulobacter crescentus)).